A 179-amino-acid polypeptide reads, in one-letter code: Large ribosomal subunit protein uL6 (179 aa).

It belongs to the universal ribosomal protein uL6 family. In terms of assembly, part of the 50S ribosomal subunit.

This protein binds to the 23S rRNA, and is important in its secondary structure. It is located near the subunit interface in the base of the L7/L12 stalk, and near the tRNA binding site of the peptidyltransferase center. This is Large ribosomal subunit protein uL6 from Bacillus anthracis.